Reading from the N-terminus, the 127-residue chain is Holotricin-2 (127 aa).

A signal peptide spans 1 to 15 (MMKLVIALCLIGISA). The propeptide occupies 16–55 (AYVVPVYYEIYPEDATFDEADIEPQLSPAELHHGSIRERR). Positions 43–84 (PAELHHGSIRERRSLQPGAPSFPMPGSQLPTSVSGNVEKQGR) are disordered. The segment covering 45–56 (ELHHGSIRERRS) has biased composition (basic and acidic residues). Polar residues predominate over residues 70 to 84 (QLPTSVSGNVEKQGR).

This sequence belongs to the coleoptericin family. Hemolymph.

It localises to the secreted. Its function is as follows. Antibacterial activity against Gram-negative bacteria but not against Gram-positive bacteria. In Holotrichia diomphalia (Korean black chafer), this protein is Holotricin-2.